The following is a 273-amino-acid chain: Dermonecrotic toxin LdSicTox-alphaIB1bi (273 aa).

The active site involves His-5. Mg(2+) is bound by residues Glu-25 and Asp-27. His-41 serves as the catalytic Nucleophile. Intrachain disulfides connect Cys-45–Cys-51 and Cys-47–Cys-190. Mg(2+) is bound at residue Asp-85. A glycan (N-linked (GlcNAc...) asparagine) is linked at Asn-250.

This sequence belongs to the arthropod phospholipase D family. Class II subfamily. It depends on Mg(2+) as a cofactor. Expressed by the venom gland.

It localises to the secreted. It carries out the reaction an N-(acyl)-sphingosylphosphocholine = an N-(acyl)-sphingosyl-1,3-cyclic phosphate + choline. It catalyses the reaction an N-(acyl)-sphingosylphosphoethanolamine = an N-(acyl)-sphingosyl-1,3-cyclic phosphate + ethanolamine. The catalysed reaction is a 1-acyl-sn-glycero-3-phosphocholine = a 1-acyl-sn-glycero-2,3-cyclic phosphate + choline. The enzyme catalyses a 1-acyl-sn-glycero-3-phosphoethanolamine = a 1-acyl-sn-glycero-2,3-cyclic phosphate + ethanolamine. Dermonecrotic toxins cleave the phosphodiester linkage between the phosphate and headgroup of certain phospholipids (sphingolipid and lysolipid substrates), forming an alcohol (often choline) and a cyclic phosphate. This toxin acts on sphingomyelin (SM). It may also act on ceramide phosphoethanolamine (CPE), lysophosphatidylcholine (LPC) and lysophosphatidylethanolamine (LPE), but not on lysophosphatidylserine (LPS), and lysophosphatidylglycerol (LPG). It acts by transphosphatidylation, releasing exclusively cyclic phosphate products as second products. Induces dermonecrosis, hemolysis, increased vascular permeability, edema, inflammatory response, and platelet aggregation. The sequence is that of Dermonecrotic toxin LdSicTox-alphaIB1bi from Loxosceles deserta (Desert recluse spider).